The sequence spans 673 residues: DNA ligase (673 aa).

Residues 35 to 39 (DAQYD), 84 to 85 (SL), and Glu115 contribute to the NAD(+) site. Catalysis depends on Lys117, which acts as the N6-AMP-lysine intermediate. Arg138, Glu178, Lys294, and Lys318 together coordinate NAD(+). Residues Cys412, Cys415, Cys430, and Cys435 each coordinate Zn(2+). The BRCT domain occupies 594 to 673 (LQSDRLAGKS…DELHALLVDE (80 aa)).

This sequence belongs to the NAD-dependent DNA ligase family. LigA subfamily. The cofactor is Mg(2+). Mn(2+) is required as a cofactor.

The enzyme catalyses NAD(+) + (deoxyribonucleotide)n-3'-hydroxyl + 5'-phospho-(deoxyribonucleotide)m = (deoxyribonucleotide)n+m + AMP + beta-nicotinamide D-nucleotide.. DNA ligase that catalyzes the formation of phosphodiester linkages between 5'-phosphoryl and 3'-hydroxyl groups in double-stranded DNA using NAD as a coenzyme and as the energy source for the reaction. It is essential for DNA replication and repair of damaged DNA. The protein is DNA ligase of Herpetosiphon aurantiacus (strain ATCC 23779 / DSM 785 / 114-95).